The chain runs to 373 residues: Homoserine O-acetyltransferase (373 aa).

One can recognise an AB hydrolase-1 domain in the interval 52-356 (NVVMVLHALT…VYGHDGFLVE (305 aa)). The active-site Nucleophile is Ser157. Arg227 is a binding site for substrate. Residues Asp320 and His350 contribute to the active site. Asp351 is a binding site for substrate.

The protein belongs to the AB hydrolase superfamily. MetX family. In terms of assembly, homodimer.

It is found in the cytoplasm. It carries out the reaction L-homoserine + acetyl-CoA = O-acetyl-L-homoserine + CoA. Its pathway is amino-acid biosynthesis; L-methionine biosynthesis via de novo pathway; O-acetyl-L-homoserine from L-homoserine: step 1/1. Transfers an acetyl group from acetyl-CoA to L-homoserine, forming acetyl-L-homoserine. The chain is Homoserine O-acetyltransferase from Mycobacterium sp. (strain KMS).